The sequence spans 492 residues: Pyrin and HIN domain-containing protein 1 (492 aa).

The Pyrin domain maps to Met1–Lys88. 2 disordered regions span residues Lys106 to Ala199 and Lys400 to Pro492. Positions Pro142–Thr159 are enriched in basic and acidic residues. Positions Arg160 to Met173 are enriched in polar residues. Positions Thr181–Ser194 are enriched in low complexity. The HIN-200 domain occupies Ala199 to Gln399. Polar residues-rich tracts occupy residues Gln416–Pro432 and Gly460–Pro492.

Belongs to the HIN-200 family. Interacts with MDM2. In terms of tissue distribution, expressed in spleen, lymph node and peripheral blood leukocytes, and at lower levels in thymus, bone marrow and fetal liver. Down-regulated in breast tumors.

Its subcellular location is the nucleus. It localises to the nucleoplasm. The protein localises to the nucleus speckle. In terms of biological role, major mediator of the tumor suppressor activity of IFN in breast cancer cells. Promotes ubiquitination and subsequent degradation of MDM2, which leads to p53/TP53 stabilization. Promotes ubiquitination and subsequent degradation of HDAC1, which in turn enhances maspin expression, and impairs invasive activity of cancer cells. This chain is Pyrin and HIN domain-containing protein 1 (PYHIN1), found in Homo sapiens (Human).